The chain runs to 401 residues: Nuclear hormone receptor family member nhr-65 (401 aa).

Positions 10-79 (PERCKVCGDT…AGMSSENFQF (70 aa)) form a DNA-binding region, nuclear receptor. 2 consecutive NR C4-type zinc fingers follow at residues 13–33 (CKVC…CRAC) and 49–67 (CENH…LQRC). One can recognise an NR LBD domain in the interval 132 to 398 (KAEKLIEFGS…FSHPEFIQDA (267 aa)).

Belongs to the nuclear hormone receptor family.

It localises to the nucleus. Orphan nuclear receptor. The chain is Nuclear hormone receptor family member nhr-65 (nhr-65) from Caenorhabditis elegans.